Here is a 454-residue protein sequence, read N- to C-terminus: Type II methyltransferase M.MvaI (454 aa).

The protein belongs to the N(4)/N(6)-methyltransferase family. N(4) subfamily.

It catalyses the reaction a 2'-deoxycytidine in DNA + S-adenosyl-L-methionine = an N(4)-methyl-2'-deoxycytidine in DNA + S-adenosyl-L-homocysteine + H(+). In terms of biological role, an alpha subtype methylase, recognizes the double-stranded sequence 5'-CCWGG-3', methylatES C-2 on both strands, and protects the DNA from cleavage by the MvaI endonuclease. The sequence is that of Type II methyltransferase M.MvaI from Kocuria varians (Micrococcus varians).